The following is a 421-amino-acid chain: Structure-specific endonuclease subunit SLX1 (421 aa).

The GIY-YIG domain occupies 13-95 (AFYCCYLLRS…QHTKESRHAE (83 aa)). Disordered stretches follow at residues 34 to 57 (TPEP…KTSS) and 96 to 120 (VERC…KRAG). The segment at 225–280 (CGVCKQRLNPRNDMIAICSHSLCRCASHLLCLSAHFLEAAGFIGKLIPKEGTCPAC) adopts an SLX1-type zinc-finger fold. Over residues 310–322 (RRRTEQVGKRKIS) the composition is skewed to basic residues. A disordered region spans residues 310–339 (RRRTEQVGKRKISNHVSSEKGESEASMPST).

Belongs to the SLX1 family. In terms of assembly, forms a heterodimer with SLX4. A divalent metal cation is required as a cofactor.

Its subcellular location is the nucleus. Its function is as follows. Catalytic subunit of the SLX1-SLX4 structure-specific endonuclease that resolves DNA secondary structures generated during DNA repair and recombination. Has endonuclease activity towards branched DNA substrates, introducing single-strand cuts in duplex DNA close to junctions with ss-DNA. The sequence is that of Structure-specific endonuclease subunit SLX1 from Ajellomyces capsulatus (strain G186AR / H82 / ATCC MYA-2454 / RMSCC 2432) (Darling's disease fungus).